Reading from the N-terminus, the 218-residue chain is MSELANYGPGAIRAAYSGDYGFRTPPPDLPSLLLNERIVYLGTPINDVVAELLIAQLLYLESEDNAKPIEIYINSPGVAGFETSAFAVYDTMRHVRMPIKTICLGLAGGFSALLMAAGTKGQRMSLPNSRIILYQPYGGARGQATDINIRAQELLTTKRTLNQLLSIHTGKTVEQIDKDTERLFYMSPQEAVSYGLIDKVLEPSANKLAKLKAVGAPV.

This sequence belongs to the peptidase S14 family. In terms of assembly, fourteen ClpP subunits assemble into 2 heptameric rings which stack back to back to give a disk-like structure with a central cavity, resembling the structure of eukaryotic proteasomes.

Its subcellular location is the cytoplasm. The enzyme catalyses Hydrolysis of proteins to small peptides in the presence of ATP and magnesium. alpha-casein is the usual test substrate. In the absence of ATP, only oligopeptides shorter than five residues are hydrolyzed (such as succinyl-Leu-Tyr-|-NHMec, and Leu-Tyr-Leu-|-Tyr-Trp, in which cleavage of the -Tyr-|-Leu- and -Tyr-|-Trp bonds also occurs).. Cleaves peptides in various proteins in a process that requires ATP hydrolysis. Has a chymotrypsin-like activity. Plays a major role in the degradation of misfolded proteins. The sequence is that of ATP-dependent Clp protease proteolytic subunit 2 from Gloeobacter violaceus (strain ATCC 29082 / PCC 7421).